Reading from the N-terminus, the 457-residue chain is Argininosuccinate lyase (457 aa).

The protein belongs to the lyase 1 family. Argininosuccinate lyase subfamily.

It is found in the cytoplasm. The catalysed reaction is 2-(N(omega)-L-arginino)succinate = fumarate + L-arginine. It participates in amino-acid biosynthesis; L-arginine biosynthesis; L-arginine from L-ornithine and carbamoyl phosphate: step 3/3. The sequence is that of Argininosuccinate lyase from Shigella boydii serotype 18 (strain CDC 3083-94 / BS512).